The primary structure comprises 337 residues: Anthranilate phosphoribosyltransferase (337 aa).

5-phospho-alpha-D-ribose 1-diphosphate is bound by residues Gly80, 83 to 84 (GD), Thr88, 90 to 93 (NIST), 108 to 116 (KHGNRAVSS), and Ser120. Gly80 contacts anthranilate. A Mg(2+)-binding site is contributed by Ser92. Asn111 contacts anthranilate. Arg166 contacts anthranilate. Mg(2+) is bound by residues Asp224 and Glu225.

Belongs to the anthranilate phosphoribosyltransferase family. As to quaternary structure, homodimer. Mg(2+) is required as a cofactor.

The enzyme catalyses N-(5-phospho-beta-D-ribosyl)anthranilate + diphosphate = 5-phospho-alpha-D-ribose 1-diphosphate + anthranilate. It functions in the pathway amino-acid biosynthesis; L-tryptophan biosynthesis; L-tryptophan from chorismate: step 2/5. Catalyzes the transfer of the phosphoribosyl group of 5-phosphorylribose-1-pyrophosphate (PRPP) to anthranilate to yield N-(5'-phosphoribosyl)-anthranilate (PRA). This is Anthranilate phosphoribosyltransferase from Anaeromyxobacter sp. (strain K).